Reading from the N-terminus, the 380-residue chain is Cytochrome b (380 aa).

4 helical membrane passes run 33 to 53, 77 to 98, 113 to 133, and 178 to 198; these read FGSLLGLCLITQIATGLFLAM, WLIRNLHANGASFFFICIYLHI, WNVGVILLLLVMMTAFVGYVL, and FFAFHFLLPFIIAAATVIHLL. H83 and H97 together coordinate heme b. Residues H182 and H196 each contribute to the heme b site. H201 is an a ubiquinone binding site. The next 4 membrane-spanning stretches (helical) occupy residues 226–246, 288–308, 320–340, and 347–367; these read YKDLLGFAALLIALTSLALFS, LGGVLALLFSILVLMLVPILH, ITQFLFWTLVADVIILTWIGG, and FIIIGQIASFLYFFLFLVLTP.

Belongs to the cytochrome b family. In terms of assembly, the cytochrome bc1 complex contains 3 respiratory subunits (MT-CYB, CYC1 and UQCRFS1), 2 core proteins (UQCRC1 and UQCRC2) and probably 6 low-molecular weight proteins. Heme b serves as cofactor.

The protein localises to the mitochondrion inner membrane. Component of the ubiquinol-cytochrome c reductase complex (complex III or cytochrome b-c1 complex) that is part of the mitochondrial respiratory chain. The b-c1 complex mediates electron transfer from ubiquinol to cytochrome c. Contributes to the generation of a proton gradient across the mitochondrial membrane that is then used for ATP synthesis. This chain is Cytochrome b (mt-cyb), found in Dactyloptena peterseni (Starry flying gurnard).